Here is a 305-residue protein sequence, read N- to C-terminus: MSSRVCPQRPVAKSSGDAKVLLIVSTYKPRAAVLAADVVNFLSIRGFQCHTIEYDGLNKESCARAGYMFAVSIGGDGTTLFAARCASPSGIPILAINLGRFGFIAPIEPRYWQQALSDYLAGGVRPAERALISCTVTRAGKEIASCLALNDVVLSSGRVARLTRAEVCFNDISFGVYEADGIILATPTGSTAYSAACGGPILDPDLDAFVLTPISALCLSNRPVVVPSSGVVRIKVLSMRHKETVLSVDGHELCTLQEEDQLLASRSSCSARLVFCTPHVFYHALCSKLAWSGSIFSRRGRRHDD.

Asp76 functions as the Proton acceptor in the catalytic mechanism. Residues 76 to 77 (DG), 150 to 151 (ND), Arg161, and Asp180 contribute to the NAD(+) site.

It belongs to the NAD kinase family. A divalent metal cation is required as a cofactor.

It is found in the cytoplasm. The enzyme catalyses NAD(+) + ATP = ADP + NADP(+) + H(+). Functionally, involved in the regulation of the intracellular balance of NAD and NADP, and is a key enzyme in the biosynthesis of NADP. Catalyzes specifically the phosphorylation on 2'-hydroxyl of the adenosine moiety of NAD to yield NADP. This Treponema pallidum (strain Nichols) protein is NAD kinase.